The sequence spans 215 residues: Soluble inorganic pyrophosphatase (215 aa).

A compositionally biased stretch (low complexity) spans 1-21 (MSQEDSTSAAAAQQPTSRPAP). The disordered stretch occupies residues 1-24 (MSQEDSTSAAAAQQPTSRPAPKLN). The Mg(2+) site is built by Asp103, Asp108, and Asp140.

Belongs to the PPase family. It depends on Mg(2+) as a cofactor. Expressed in metabolically active tissue such as root, shoot, embryo and aleurone.

It localises to the cytoplasm. The enzyme catalyses diphosphate + H2O = 2 phosphate + H(+). May play a role in germination. The sequence is that of Soluble inorganic pyrophosphatase (IPP) from Hordeum vulgare subsp. vulgare (Domesticated barley).